Reading from the N-terminus, the 506-residue chain is Galactose/methyl galactoside import ATP-binding protein MglA (506 aa).

2 consecutive ABC transporter domains span residues 14 to 249 (LEMS…VGRS) and 264 to 506 (VILE…SLHL). ATP is bound at residue 46-53 (GENGAGKS).

It belongs to the ABC transporter superfamily. Galactose/methyl galactoside importer (TC 3.A.1.2.3) family. As to quaternary structure, the complex is composed of one ATP-binding protein (MglA), two transmembrane proteins (MglC) and a solute-binding protein (MglB).

The protein localises to the cell inner membrane. The catalysed reaction is D-galactose(out) + ATP + H2O = D-galactose(in) + ADP + phosphate + H(+). It carries out the reaction methyl beta-D-galactoside(out) + ATP + H2O = methyl beta-D-galactoside(in) + ADP + phosphate + H(+). In terms of biological role, part of the ABC transporter complex MglABC involved in galactose/methyl galactoside import. Responsible for energy coupling to the transport system. The polypeptide is Galactose/methyl galactoside import ATP-binding protein MglA (Shigella flexneri serotype 5b (strain 8401)).